Reading from the N-terminus, the 1116-residue chain is Surface layer protein (1116 aa).

An N-terminal signal peptide occupies residues 1–53 (MQDSGFKKKDRSTNIPQEQFVYTRGGEHKVMKKVVNSVLASALAITVAPMAFA). 3 SLH domains span residues 54–117 (AEDT…KLAQ), 118–181 (FNTT…RGVW), and 182–231 (PNSM…YGTD).

Its subcellular location is the secreted. The protein localises to the cell wall. It localises to the S-layer. This chain is Surface layer protein, found in Brevibacillus choshinensis.